Here is a 170-residue protein sequence, read N- to C-terminus: Large ribosomal subunit protein uL11 (170 aa).

The protein belongs to the universal ribosomal protein uL11 family. As to quaternary structure, part of the ribosomal stalk of the 50S ribosomal subunit. Interacts with L10 and the large rRNA to form the base of the stalk. L10 forms an elongated spine to which L12 dimers bind in a sequential fashion forming a multimeric L10(L12)X complex.

Forms part of the ribosomal stalk which helps the ribosome interact with GTP-bound translation factors. This is Large ribosomal subunit protein uL11 from Saccharolobus islandicus (strain M.14.25 / Kamchatka #1) (Sulfolobus islandicus).